The following is a 110-amino-acid chain: U12-hexatoxin-Hi1a (110 aa).

Positions 1-18 (MRVALVFLVLSILAATHG) are cleaved as a signal peptide. Cystine bridges form between C72/C86, C79/C91, and C85/C104.

As to expression, expressed by the venom gland.

Its subcellular location is the secreted. Functionally, probable ion channel inhibitor. This is U12-hexatoxin-Hi1a from Hadronyche infensa (Fraser island funnel-web spider).